We begin with the raw amino-acid sequence, 145 residues long: D-aminoacyl-tRNA deacylase (145 aa).

Positions 137 to 138 (GP) match the Gly-cisPro motif, important for rejection of L-amino acids motif.

The protein belongs to the DTD family. Homodimer.

The protein localises to the cytoplasm. The catalysed reaction is glycyl-tRNA(Ala) + H2O = tRNA(Ala) + glycine + H(+). It catalyses the reaction a D-aminoacyl-tRNA + H2O = a tRNA + a D-alpha-amino acid + H(+). An aminoacyl-tRNA editing enzyme that deacylates mischarged D-aminoacyl-tRNAs. Also deacylates mischarged glycyl-tRNA(Ala), protecting cells against glycine mischarging by AlaRS. Acts via tRNA-based rather than protein-based catalysis; rejects L-amino acids rather than detecting D-amino acids in the active site. By recycling D-aminoacyl-tRNA to D-amino acids and free tRNA molecules, this enzyme counteracts the toxicity associated with the formation of D-aminoacyl-tRNA entities in vivo and helps enforce protein L-homochirality. This chain is D-aminoacyl-tRNA deacylase, found in Sodalis glossinidius (strain morsitans).